Reading from the N-terminus, the 630-residue chain is Mannosyl-oligosaccharide 1,2-alpha-mannosidase IC (630 aa).

Residues 1–22 (MLMRKVPGFVPASPWGLRLPQK) lie on the Cytoplasmic side of the membrane. Residues 23-43 (FLFLLFLSGLVTLCFGALFLL) traverse the membrane as a helical; Signal-anchor for type II membrane protein segment. Residues 44–630 (PHSSRLKRLF…DSSGRAWGRH (587 aa)) are Lumenal-facing. The tract at residues 74 to 140 (PAREQEPPPN…ASRPGDEGVP (67 aa)) is disordered. Pro residues predominate over residues 80-89 (PPPNPAPAAP). Residues 102–113 (PRRRKGGLRRTR) are compositionally biased toward basic residues. Ser-164 is modified (phosphoserine). Asn-250 carries an N-linked (GlcNAc...) asparagine glycan. Residues Cys-453 and Cys-485 are joined by a disulfide bond. The Proton donor role is filled by Glu-499. Ca(2+) is bound at residue Thr-610. N-linked (GlcNAc...) asparagine glycosylation is present at Asn-618.

The protein belongs to the glycosyl hydrolase 47 family. Ca(2+) serves as cofactor. In terms of tissue distribution, expressed in most tissues with the exception of lung, muscle and pancreas. Highly expressed in placenta.

Its subcellular location is the golgi apparatus membrane. It carries out the reaction N(4)-(alpha-D-Man-(1-&gt;2)-alpha-D-Man-(1-&gt;2)-alpha-D-Man-(1-&gt;3)-[alpha-D-Man-(1-&gt;2)-alpha-D-Man-(1-&gt;3)-[alpha-D-Man-(1-&gt;2)-alpha-D-Man-(1-&gt;6)]-alpha-D-Man-(1-&gt;6)]-beta-D-Man-(1-&gt;4)-beta-D-GlcNAc-(1-&gt;4)-beta-D-GlcNAc)-L-asparaginyl-[protein] (N-glucan mannose isomer 9A1,2,3B1,2,3) + 4 H2O = N(4)-(alpha-D-Man-(1-&gt;3)-[alpha-D-Man-(1-&gt;3)-[alpha-D-Man-(1-&gt;6)]-alpha-D-Man-(1-&gt;6)]-beta-D-Man-(1-&gt;4)-beta-D-GlcNAc-(1-&gt;4)-beta-D-GlcNAc)-L-asparaginyl-[protein] (N-glucan mannose isomer 5A1,2) + 4 beta-D-mannose. It catalyses the reaction N(4)-(alpha-D-Man-(1-&gt;2)-alpha-D-Man-(1-&gt;2)-alpha-D-Man-(1-&gt;3)-[alpha-D-Man-(1-&gt;3)-[alpha-D-Man-(1-&gt;2)-alpha-D-Man-(1-&gt;6)]-alpha-D-Man-(1-&gt;6)]-beta-D-Man-(1-&gt;4)-beta-D-GlcNAc-(1-&gt;4)-beta-D-GlcNAc)-L-asparaginyl-[protein] (N-glucan mannose isomer 8A1,2,3B1,3) + 3 H2O = N(4)-(alpha-D-Man-(1-&gt;3)-[alpha-D-Man-(1-&gt;3)-[alpha-D-Man-(1-&gt;6)]-alpha-D-Man-(1-&gt;6)]-beta-D-Man-(1-&gt;4)-beta-D-GlcNAc-(1-&gt;4)-beta-D-GlcNAc)-L-asparaginyl-[protein] (N-glucan mannose isomer 5A1,2) + 3 beta-D-mannose. Its pathway is protein modification; protein glycosylation. Inhibited by both 1-deoxymannojirimycin and kifunensine. Functionally, involved in the maturation of Asn-linked oligosaccharides. Trim alpha-1,2-linked mannose residues from Man(9)GlcNAc(2) to produce first Man(8)GlcNAc(2) then Man(6)GlcNAc and a small amount of Man(5)GlcNAc. This chain is Mannosyl-oligosaccharide 1,2-alpha-mannosidase IC (MAN1C1), found in Homo sapiens (Human).